The chain runs to 517 residues: MDIIGGQHLRQMWDDLADVYGHKTALICESSGGVVNRYSYLELNQEINRTANLFYTLGIRKGDKVALHLDNCPEFIFCWFGLAKIGAIMVPINARLLREESTWILQNSQACLLVTSAQFYPMYQQIQQEDASQLRHICLIDMALPADDGVSSFTQLKNQQPATLCYAPPLSTDDTAEILFTSGTTSRPKGVVITHYNLRFAGYYSAWQCALRDDDVYLTVMPAFHIDCQCTAAMAAFSAGATFVLVEKYSARAFWGQVQKYRATITECIPMMIRTLMVQPPSANDRQHRLREVMFYLNLSEQEKDAFCERFGVRLLTSYGMTETIVGIIGDRPGDKRRWPSIGRAGFCYEAEIRDDHNRPLPAGELGEICIKGVPGKTIFKEYFLNPKATAKVLEADGWLHTGDTGYRDEEGFFYFVDRRCNMIKRGGENVSCVELENIIATHPKIQDIVVVGIKDSIRDEAIKAFVVLNEGETLSEEEFFCFCEQNMAKFKVPSYLEIRKDLPRNCSGKIIRKNLK.

This sequence belongs to the ATP-dependent AMP-binding enzyme family.

It catalyses the reaction 4-(trimethylamino)butanoate + ATP + CoA = 4-(trimethylamino)butanoyl-CoA + AMP + diphosphate. The enzyme catalyses crotonobetaine + ATP + CoA = crotonobetainyl-CoA + AMP + diphosphate. The catalysed reaction is (R)-carnitine + ATP + CoA = (R)-carnitinyl-CoA + AMP + diphosphate. The protein operates within amine and polyamine metabolism; carnitine metabolism. Catalyzes the transfer of CoA to carnitine, generating the initial carnitinyl-CoA needed for the CaiB reaction cycle. Also has activity toward crotonobetaine and gamma-butyrobetaine. This Escherichia coli O1:K1 / APEC protein is Crotonobetaine/carnitine--CoA ligase.